A 90-amino-acid chain; its full sequence is Co-chaperonin GroES (90 aa).

This sequence belongs to the GroES chaperonin family. Heptamer of 7 subunits arranged in a ring. Interacts with the chaperonin GroEL.

It is found in the cytoplasm. Its function is as follows. Together with the chaperonin GroEL, plays an essential role in assisting protein folding. The GroEL-GroES system forms a nano-cage that allows encapsulation of the non-native substrate proteins and provides a physical environment optimized to promote and accelerate protein folding. GroES binds to the apical surface of the GroEL ring, thereby capping the opening of the GroEL channel. The protein is Co-chaperonin GroES of Fusobacterium nucleatum subsp. polymorphum (Fusobacterium polymorphum).